A 466-amino-acid chain; its full sequence is ATP synthase subunit beta (466 aa).

148-155 (GGAGVGKT) serves as a coordination point for ATP.

This sequence belongs to the ATPase alpha/beta chains family. F-type ATPases have 2 components, CF(1) - the catalytic core - and CF(0) - the membrane proton channel. CF(1) has five subunits: alpha(3), beta(3), gamma(1), delta(1), epsilon(1). CF(0) has three main subunits: a(1), b(2) and c(9-12). The alpha and beta chains form an alternating ring which encloses part of the gamma chain. CF(1) is attached to CF(0) by a central stalk formed by the gamma and epsilon chains, while a peripheral stalk is formed by the delta and b chains.

Its subcellular location is the cell inner membrane. It catalyses the reaction ATP + H2O + 4 H(+)(in) = ADP + phosphate + 5 H(+)(out). In terms of biological role, produces ATP from ADP in the presence of a proton gradient across the membrane. The catalytic sites are hosted primarily by the beta subunits. The chain is ATP synthase subunit beta from Xylella fastidiosa (strain M23).